Consider the following 431-residue polypeptide: Adenylosuccinate synthetase (431 aa).

Residues 13-19 (GDEGKGK) and 41-43 (GHT) each bind GTP. The active-site Proton acceptor is the D14. 2 residues coordinate Mg(2+): D14 and G41. IMP-binding positions include 14–17 (DEGK), 39–42 (NAGH), T130, R144, Q225, T240, and R304. The Proton donor role is filled by H42. Residue 300 to 306 (ATTGRKR) coordinates substrate. GTP contacts are provided by residues R306, 332-334 (KLD), and 415-417 (STG).

It belongs to the adenylosuccinate synthetase family. In terms of assembly, homodimer. The cofactor is Mg(2+).

It is found in the cytoplasm. The catalysed reaction is IMP + L-aspartate + GTP = N(6)-(1,2-dicarboxyethyl)-AMP + GDP + phosphate + 2 H(+). Its pathway is purine metabolism; AMP biosynthesis via de novo pathway; AMP from IMP: step 1/2. Plays an important role in the de novo pathway of purine nucleotide biosynthesis. Catalyzes the first committed step in the biosynthesis of AMP from IMP. This Shewanella woodyi (strain ATCC 51908 / MS32) protein is Adenylosuccinate synthetase.